The chain runs to 612 residues: Peroxisomal carnitine O-octanoyltransferase (612 aa).

Residue M1 is modified to N-acetylmethionine. 2 positions are modified to N6-succinyllysine: K40 and K57. The active-site Proton acceptor is H327. Residues K406 and 410-417 (KNKMLHPD) each bind CoA. K406 carries the post-translational modification N6-acetyllysine; alternate. At K406 the chain carries N6-succinyllysine; alternate. Positions 439, 441, and 452 each coordinate (R)-carnitine. Residues 610 to 612 (THL) carry the Microbody targeting signal motif.

The protein belongs to the carnitine/choline acetyltransferase family. Monomer.

The protein localises to the peroxisome. It catalyses the reaction octanoyl-CoA + (R)-carnitine = O-octanoyl-(R)-carnitine + CoA. The enzyme catalyses 4,8-dimethylnonanoyl-CoA + (R)-carnitine = O-4,8-dimethylnonanoyl-(R)-carnitine + CoA. It participates in lipid metabolism; fatty acid beta-oxidation. Functionally, beta-oxidation of fatty acids. The highest activity concerns the C6 to C10 chain length substrate. Converts the end product of pristanic acid beta oxidation, 4,8-dimethylnonanoyl-CoA, to its corresponding carnitine ester. This is Peroxisomal carnitine O-octanoyltransferase (CROT) from Homo sapiens (Human).